Reading from the N-terminus, the 356-residue chain is Alanine racemase, catabolic (356 aa).

K35 acts as the Proton acceptor; specific for D-alanine in catalysis. The residue at position 35 (K35) is an N6-(pyridoxal phosphate)lysine. Residue R130 participates in substrate binding. The active-site Proton acceptor; specific for L-alanine is the Y253. M301 contributes to the substrate binding site.

The protein belongs to the alanine racemase family. The cofactor is pyridoxal 5'-phosphate.

The catalysed reaction is L-alanine = D-alanine. In terms of biological role, isomerizes L-alanine to D-alanine which is then oxidized to pyruvate by DadA. This is Alanine racemase, catabolic (dadX) from Escherichia coli O6:H1 (strain CFT073 / ATCC 700928 / UPEC).